Here is a 242-residue protein sequence, read N- to C-terminus: Anti-Pycsar protein Apyc1 (242 aa).

The tract at residues 17–216 (FNNNALIEQD…EMQSIIKLMH (200 aa)) is beta-lactamase-like. The Zn(2+) site is built by His-59, His-61, Asp-63, His-64, His-142, Asp-162, and His-216.

Belongs to the anti-Pycsar protein Apyc1 family. As to quaternary structure, homodimer. Requires Zn(2+) as cofactor.

It carries out the reaction 3',5'-cyclic CMP + H2O = CMP + H(+). The catalysed reaction is 3',5'-cyclic UMP + H2O = UMP + H(+). Its function is as follows. Counteracts the endogenous Pycsar antiviral defense system. Phosphodiesterase that enables metal-dependent hydrolysis of host cyclic nucleotide Pycsar defense signals such as cCMP and cUMP. This is Anti-Pycsar protein Apyc1 from Saccharibacillus brassicae.